A 297-amino-acid chain; its full sequence is Vacuolar protein sorting-associated protein 26C (297 aa).

It belongs to the VPS26 family. As to quaternary structure, component of the commander complex that is essential for endosomal recycling of transmembrane cargos; the commander complex is composed of the CCC subcomplex and the retriever subcomplex. Component of the heterotrimeric retriever complex consisting of VPS26C, VPS29 and VPS35L; within the complex interacts with VPS35L. Interacts with SNX17 (via C-terminus); the interaction is direct and associates SNX17 with the retriever complex. Interacts with SNX31; the interaction is direct. As to expression, ubiquitously expressed.

It is found in the endosome. Component of the commander complex that is essential for endosomal recycling of transmembrane cargos; the commander complex is composed of the CCC subcomplex and the retriever subcomplex. Component of the retriever complex, which is a heterotrimeric complex related to retromer cargo-selective complex (CSC) and essential for retromer-independent retrieval and recycling of numerous cargos such as integrin alpha-5/beta-1 (ITGA5:ITGB1). The recruitment of the retriever complex to the endosomal membrane involves CCC and WASH complexes. In the endosomes, drives the retriever and recycling of NxxY-motif-containing cargo proteins by coupling to SNX17, a cargo essential for the homeostatic maintenance of numerous cell surface proteins associated with processes that include cell migration, cell adhesion, nutrient supply and cell signaling. Functionally, (Microbial infection) The heterotrimeric retriever complex, in collaboration with the CCC complex, mediates the exit of human papillomavirus to the cell surface. The polypeptide is Vacuolar protein sorting-associated protein 26C (Homo sapiens (Human)).